Here is a 379-residue protein sequence, read N- to C-terminus: MKIATLAVVSAFAATAIAGPIRPDGVVNDKFLIELGPGETQWVTKQQKHEMRAHINSIYKAGQGFVDITDEFGTDFTTAEVVPANYPKSALHAAVVNPMIAGLSKENLMRDLNTLVKFNNRYYESPTGVESATWVFNEVQKIIQASGVKGAKVEKFTNKFKQFSVIATIPGASKNTVIVGAHQDSINLKDPMKGRAPGADDNGSGSVVVLEAFRNVLKSKAIQAANATNTLEFHWYAGEEGGLLGSNNIFKKYKADGRKVKAMLNQDLTGFTKKGNPEQFGLITDNTNAELNEFCKTIVEKYATIKIIEAKCGYACSDHASAHRNGFPSSFIAETNFRNTNPYLHTADDVIANLDFNHMLEHAKVVVGFMGELAMTPNL.

The N-terminal stretch at 1–18 (MKIATLAVVSAFAATAIA) is a signal peptide. Positions 182 and 201 each coordinate Zn(2+). N-linked (GlcNAc...) asparagine glycans are attached at residues Asn202 and Asn226. Residues Glu240 and Asp267 each contribute to the Zn(2+) site. A disulfide bridge connects residues Cys312 and Cys316. Position 345 (His345) interacts with Zn(2+).

Belongs to the peptidase M28 family. M28E subfamily. Monomer. Zn(2+) serves as cofactor.

Its subcellular location is the secreted. Probable extracellular aminopeptidase which contributes to pathogenicity. This is Probable leucine aminopeptidase ARB_01443 from Arthroderma benhamiae (strain ATCC MYA-4681 / CBS 112371) (Trichophyton mentagrophytes).